The primary structure comprises 299 residues: Tyrosine recombinase XerC (299 aa).

One can recognise a Core-binding (CB) domain in the interval 1 to 85; that stretch reads MERQLEAYCA…AVRGLYRYLN (85 aa). Residues 106–285 form the Tyr recombinase domain; that stretch reads RLPKVLDTDR…DFQHLAAVYD (180 aa). Residues Arg146, Lys170, His237, Arg240, and His263 contribute to the active site. Tyr272 acts as the O-(3'-phospho-DNA)-tyrosine intermediate in catalysis.

The protein belongs to the 'phage' integrase family. XerC subfamily. In terms of assembly, forms a cyclic heterotetrameric complex composed of two molecules of XerC and two molecules of XerD.

It localises to the cytoplasm. In terms of biological role, site-specific tyrosine recombinase, which acts by catalyzing the cutting and rejoining of the recombining DNA molecules. The XerC-XerD complex is essential to convert dimers of the bacterial chromosome into monomers to permit their segregation at cell division. It also contributes to the segregational stability of plasmids. This Pseudomonas putida (strain W619) protein is Tyrosine recombinase XerC.